An 892-amino-acid polypeptide reads, in one-letter code: Translation initiation factor IF-2 (892 aa).

The tract at residues 88–306 (KKRTFVKRDP…LQQGFQKPAQ (219 aa)) is disordered. Basic and acidic residues-rich tracts occupy residues 93–159 (VKRD…KDKV) and 166–216 (DMIK…EENK). The span at 254-269 (GRGRNAKAARPAKKGK) shows a compositional bias: basic residues. Residues 270 to 282 (HAESKADREEARA) are compositionally biased toward basic and acidic residues. A tr-type G domain is found at 391–560 (PRAPVVTIMG…LLQAEVLELK (170 aa)). Residues 400 to 407 (GHVDHGKT) are G1. Position 400–407 (400–407 (GHVDHGKT)) interacts with GTP. A G2 region spans residues 425 to 429 (GITQH). The tract at residues 446-449 (DTPG) is G3. Residues 446 to 450 (DTPGH) and 500 to 503 (NKID) each bind GTP. The interval 500–503 (NKID) is G4. The G5 stretch occupies residues 536 to 538 (SAK).

Belongs to the TRAFAC class translation factor GTPase superfamily. Classic translation factor GTPase family. IF-2 subfamily.

The protein localises to the cytoplasm. One of the essential components for the initiation of protein synthesis. Protects formylmethionyl-tRNA from spontaneous hydrolysis and promotes its binding to the 30S ribosomal subunits. Also involved in the hydrolysis of GTP during the formation of the 70S ribosomal complex. This Salmonella schwarzengrund (strain CVM19633) protein is Translation initiation factor IF-2.